The sequence spans 198 residues: NADH-quinone oxidoreductase subunit I (198 aa).

4Fe-4S ferredoxin-type domains follow at residues 42-72 (LNRWPDGLEKCVGCELCAWACPADAIYVEGA) and 88-117 (RVYEINYLRCILCGMCIEACPTRALTMTND). C52, C55, C58, C62, C97, C100, C103, and C107 together coordinate [4Fe-4S] cluster. A disordered region spans residues 137-198 (APLKEGMEQP…DTQHKDEEAA (62 aa)). Residues 182–198 (AHRDDDNDTQHKDEEAA) show a composition bias toward basic and acidic residues.

It belongs to the complex I 23 kDa subunit family. NDH-1 is composed of 14 different subunits. Subunits NuoA, H, J, K, L, M, N constitute the membrane sector of the complex. It depends on [4Fe-4S] cluster as a cofactor.

It is found in the cell membrane. It catalyses the reaction a quinone + NADH + 5 H(+)(in) = a quinol + NAD(+) + 4 H(+)(out). Functionally, NDH-1 shuttles electrons from NADH, via FMN and iron-sulfur (Fe-S) centers, to quinones in the respiratory chain. The immediate electron acceptor for the enzyme in this species is believed to be ubiquinone. Couples the redox reaction to proton translocation (for every two electrons transferred, four hydrogen ions are translocated across the cytoplasmic membrane), and thus conserves the redox energy in a proton gradient. This Cutibacterium acnes (strain DSM 16379 / KPA171202) (Propionibacterium acnes) protein is NADH-quinone oxidoreductase subunit I.